Here is a 172-residue protein sequence, read N- to C-terminus: MKWTIYQLHQMPKQSFEFDETVELNELTKLNSDIRRISPVRVKGRADIKSKQVSFDFTISGEMLLPCSRTLVDVPYPFEISTKELFIFHHTDDIEDDDVHIVEDDTIDITPIVKEEILLEIPMQIFCESEQEKGAAPQEGKDWQVISEEDKKNQVDPRLAALEKLLKQDDES.

Positions 130 to 154 (EQEKGAAPQEGKDWQVISEEDKKNQ) are disordered.

This is an uncharacterized protein from Bacillus subtilis (strain 168).